A 244-amino-acid chain; its full sequence is L-xylulose reductase (244 aa).

N-acetylmethionine is present on M1. 11–39 (LVTGAGKGIGRSTVLALKAAGAQVVAVSR) is an NADP(+) binding site. At R21 the chain carries Omega-N-methylarginine. A substrate-binding site is contributed by S136. Y149 functions as the Proton acceptor in the catalytic mechanism. Residue K153 is part of the active site.

This sequence belongs to the short-chain dehydrogenases/reductases (SDR) family. In terms of assembly, homotetramer. In terms of tissue distribution, highly expressed in kidney, liver and epididymis. Expressed at intermediate level in lung. Weakly or not expressed in brain, heart, spleen and testis.

It is found in the membrane. The protein localises to the apical cell membrane. The catalysed reaction is xylitol + NADP(+) = L-xylulose + NADPH + H(+). Its function is as follows. Catalyzes the NADPH-dependent reduction of several pentoses, tetroses, trioses, alpha-dicarbonyl compounds and L-xylulose. Participates in the uronate cycle of glucose metabolism. May play a role in the water absorption and cellular osmoregulation in the proximal renal tubules by producing xylitol, an osmolyte, thereby preventing osmolytic stress from occurring in the renal tubules. The polypeptide is L-xylulose reductase (Dcxr) (Mus musculus (Mouse)).